A 213-amino-acid chain; its full sequence is Adenylate kinase (213 aa).

Residue G14–T19 coordinates ATP. Residues S34–V63 form an NMP region. Residues T35, R40, A61–V63, G89–R92, and Q96 contribute to the AMP site. The segment at S129–D162 is LID. R130 serves as a coordination point for ATP. 2 residues coordinate Zn(2+): C133 and C136. I139–Y140 contacts ATP. Residues C149 and C152 each coordinate Zn(2+). Residues R159 and R170 each contribute to the AMP site. N198 is an ATP binding site.

Belongs to the adenylate kinase family. In terms of assembly, monomer.

It localises to the cytoplasm. The catalysed reaction is AMP + ATP = 2 ADP. It functions in the pathway purine metabolism; AMP biosynthesis via salvage pathway; AMP from ADP: step 1/1. Catalyzes the reversible transfer of the terminal phosphate group between ATP and AMP. Plays an important role in cellular energy homeostasis and in adenine nucleotide metabolism. The sequence is that of Adenylate kinase from Chlamydia pneumoniae (Chlamydophila pneumoniae).